Reading from the N-terminus, the 1164-residue chain is Integrin alpha-5 (1164 aa).

The segment covering 1–14 (MREEGGGSREKEGE) has biased composition (basic and acidic residues). Residues 1 to 119 (MREEGGGSRE…MGSRTPGSPL (119 aa)) form a disordered region. Positions 81-90 (LLPALSHSPL) are enriched in low complexity. One copy of the FG-GAP 1 repeat lies at 156 to 221 (NLDAEAPAVL…CPWGTSPAQC (66 aa)). The N-linked (GlcNAc...) asparagine glycan is linked to N197. A disulfide bond links C212 and C221. Residue S240 is modified to Phosphoserine. 6 FG-GAP repeats span residues 241-301 (SEGE…QILE), 306-358 (RSDF…AESY), 372-424 (QTRQ…GSDI), 425-490 (RSLY…GMEP), 491-550 (TPTL…GLAS), and 554-617 (QVLL…IFPA). C269 and C289 are joined by a disulfide. N295 carries N-linked (GlcNAc...) asparagine glycosylation. A disulfide bridge links C305 with C318. 2 residues coordinate a protein: Q375 and D382. Residues E393, S395, D397, and D401 each coordinate Ca(2+). N-linked (GlcNAc...) asparagine glycans are attached at residues N410, N420, and N429. D447, N449, D451, L453, D455, D514, D516, D518, Y520, D522, D578, D580, N582, Y584, and D586 together coordinate Ca(2+). An intrachain disulfide couples C626 to C635. N637, N643, N706, and N722 each carry an N-linked (GlcNAc...) asparagine glycan. C641 and C697 are joined by a disulfide. C758 and C764 form a disulfide bridge. 5 N-linked (GlcNAc...) asparagine glycosylation sites follow: N788, N825, N837, N886, and N982. Cysteines 831 and 844 form a disulfide. 3 cysteine pairs are disulfide-bonded: C962–C1072, C983–C1036, and C1026–C1031. Residues 983–1022 (CTTSHPPNPEGLELDPEGSQHHRLQRRDVPGRSPASSGPQ) are disordered. The helical transmembrane segment at 1114 to 1134 (LWIIILAILIGLLLLGLLIYI) threads the bilayer. The Cytoplasmic portion of the chain corresponds to 1135-1164 (LYKLGFFKRSLPYGTAMEKAQLKPPATSDA). The segment at 1136 to 1143 (YKLGFFKR) is interaction with HPS5. The short motif at 1139–1143 (GFFKR) is the GFFKR motif element.

The protein belongs to the integrin alpha chain family. Heterodimer of an alpha and a beta subunit. The alpha subunit is composed of a heavy and a light chain linked by a disulfide bond. Alpha-5 associates with beta-1. Interacts with NISCH. Interacts with HPS5. Interacts with RAB21 and COMP. Interacts with CIB1. ITGA5:ITGB1 interacts with CCN3. ITGA5:ITGB1 interacts with FBN1. ITGA5:ITGB1 interacts with IL1B. ITGA5:ITGB1 interacts with ACE2. ITGA5:ITGB1 interacts with SELP. Interacts with ANGPT2. ITGA5:ITGB1 interacts with IGFBP2. ITGA5:ITGB1 interacts with IGFBP1. In terms of processing, proteolytic cleavage by PCSK5 mediates activation of the precursor.

It is found in the cell membrane. Its subcellular location is the cell junction. It localises to the focal adhesion. Integrin alpha-5/beta-1 (ITGA5:ITGB1) is a receptor for fibronectin and fibrinogen. It recognizes the sequence R-G-D in its ligands. ITGA5:ITGB1 binds to PLA2G2A via a site (site 2) which is distinct from the classical ligand-binding site (site 1) and this induces integrin conformational changes and enhanced ligand binding to site 1. ITGA5:ITGB1 acts as a receptor for fibrillin-1 (FBN1) and mediates R-G-D-dependent cell adhesion to FBN1. ITGA5:ITGB1 acts as a receptor for fibronectin (FN1) and mediates R-G-D-dependent cell adhesion to FN1. ITGA5:ITGB1 is a receptor for IL1B and binding is essential for IL1B signaling. ITGA5:ITGB3 is a receptor for soluble CD40LG and is required for CD40/CD40LG signaling. This Bos taurus (Bovine) protein is Integrin alpha-5 (ITGA5).